The primary structure comprises 1551 residues: Pentafunctional AROM polypeptide (1551 aa).

Residues 1-379 are 3-dehydroquinate synthase; that stretch reads MSIEKVPILG…YQLKAHQVSK (379 aa). Residues 42-44, 80-83, 111-113, and D116 each bind NAD(+); these read DTN, ENNK, and GGV. R127 contributes to the 7-phospho-2-dehydro-3-deoxy-D-arabino-heptonate binding site. Residue 136–137 participates in NAD(+) binding; it reads TT. Positions 143 and 149 each coordinate 7-phospho-2-dehydro-3-deoxy-D-arabino-heptonate. K158 serves as a coordination point for NAD(+). N159 lines the 7-phospho-2-dehydro-3-deoxy-D-arabino-heptonate pocket. NAD(+)-binding positions include 176–179 and N187; that span reads FLET. E191 serves as a coordination point for Zn(2+). 7-phospho-2-dehydro-3-deoxy-D-arabino-heptonate contacts are provided by residues 191-194 and K243; that span reads EVVK. Catalysis depends on E253, which acts as the Proton acceptor; for 3-dehydroquinate synthase activity. 7-phospho-2-dehydro-3-deoxy-D-arabino-heptonate-binding positions include 257–261 and H264; that span reads RNLLN. Zn(2+) is bound at residue H264. The Proton acceptor; for 3-dehydroquinate synthase activity role is filled by H268. The 7-phospho-2-dehydro-3-deoxy-D-arabino-heptonate site is built by H280 and K351. H280 contributes to the Zn(2+) binding site. Residues 392–838 are EPSP synthase; that stretch reads VHPFTNPPKE…WDILHSKFKI (447 aa). The interval 858-1048 is shikimate kinase; that stretch reads DKSIIVIGMR…VPAGRSAAVV (191 aa). An ATP-binding site is contributed by 865–872; it reads GMRGTGKS. The tract at residues 1049–1258 is 3-dehydroquinase; it reads LTSPDLNEVV…NDEEFLTIGE (210 aa). R1194 (schiff-base intermediate with substrate; for 3-dehydroquinate dehydratase activity) is an active-site residue. A shikimate dehydrogenase region spans residues 1271–1551; that stretch reads AKKFWVIGSP…EIIHRAVVEE (281 aa).

The protein in the N-terminal section; belongs to the sugar phosphate cyclases superfamily. Dehydroquinate synthase family. It in the 2nd section; belongs to the EPSP synthase family. In the 3rd section; belongs to the shikimate kinase family. This sequence in the 4th section; belongs to the type-I 3-dehydroquinase family. The protein in the C-terminal section; belongs to the shikimate dehydrogenase family. As to quaternary structure, homodimer. It depends on Zn(2+) as a cofactor.

Its subcellular location is the cytoplasm. It carries out the reaction 7-phospho-2-dehydro-3-deoxy-D-arabino-heptonate = 3-dehydroquinate + phosphate. The enzyme catalyses 3-dehydroquinate = 3-dehydroshikimate + H2O. It catalyses the reaction shikimate + NADP(+) = 3-dehydroshikimate + NADPH + H(+). The catalysed reaction is shikimate + ATP = 3-phosphoshikimate + ADP + H(+). It carries out the reaction 3-phosphoshikimate + phosphoenolpyruvate = 5-O-(1-carboxyvinyl)-3-phosphoshikimate + phosphate. It participates in metabolic intermediate biosynthesis; chorismate biosynthesis; chorismate from D-erythrose 4-phosphate and phosphoenolpyruvate: step 2/7. Its pathway is metabolic intermediate biosynthesis; chorismate biosynthesis; chorismate from D-erythrose 4-phosphate and phosphoenolpyruvate: step 3/7. The protein operates within metabolic intermediate biosynthesis; chorismate biosynthesis; chorismate from D-erythrose 4-phosphate and phosphoenolpyruvate: step 4/7. It functions in the pathway metabolic intermediate biosynthesis; chorismate biosynthesis; chorismate from D-erythrose 4-phosphate and phosphoenolpyruvate: step 5/7. It participates in metabolic intermediate biosynthesis; chorismate biosynthesis; chorismate from D-erythrose 4-phosphate and phosphoenolpyruvate: step 6/7. Functionally, the AROM polypeptide catalyzes 5 consecutive enzymatic reactions in prechorismate polyaromatic amino acid biosynthesis. The polypeptide is Pentafunctional AROM polypeptide (Candida albicans (strain SC5314 / ATCC MYA-2876) (Yeast)).